The chain runs to 78 residues: Large ribosomal subunit protein bL28 (78 aa).

Residues 1–22 (MSKVCQVTGKRPTTGNNVSHAN) form a disordered region. A compositionally biased stretch (polar residues) spans 11–22 (RPTTGNNVSHAN).

The protein belongs to the bacterial ribosomal protein bL28 family.

The polypeptide is Large ribosomal subunit protein bL28 (Alkalilimnicola ehrlichii (strain ATCC BAA-1101 / DSM 17681 / MLHE-1)).